The sequence spans 562 residues: NAD-dependent malic enzyme (562 aa).

Tyrosine 101 acts as the Proton donor in catalysis. Residue arginine 154 participates in NAD(+) binding. Lysine 172 acts as the Proton acceptor in catalysis. Residues glutamate 243, aspartate 244, and aspartate 267 each contribute to the a divalent metal cation site. NAD(+) contacts are provided by aspartate 267 and asparagine 415.

Belongs to the malic enzymes family. In terms of assembly, homotetramer. Mg(2+) is required as a cofactor. The cofactor is Mn(2+).

It carries out the reaction (S)-malate + NAD(+) = pyruvate + CO2 + NADH. It catalyses the reaction oxaloacetate + H(+) = pyruvate + CO2. The sequence is that of NAD-dependent malic enzyme from Shewanella loihica (strain ATCC BAA-1088 / PV-4).